A 321-amino-acid chain; its full sequence is Probable cell division protein WhiA (321 aa).

A DNA-binding region (H-T-H motif) is located at residues 276–309 (NLKELGELLEPPVGKSGVNHRLRKLEKIAEQLHQ).

This sequence belongs to the WhiA family.

Involved in cell division and chromosome segregation. This chain is Probable cell division protein WhiA, found in Natranaerobius thermophilus (strain ATCC BAA-1301 / DSM 18059 / JW/NM-WN-LF).